Here is a 342-residue protein sequence, read N- to C-terminus: Inactive chitinase-like protein 2 (342 aa).

The signal sequence occupies residues M1 to A19. The region spanning E20–G60 is the Chitin-binding type-1 domain. 7 disulfide bridges follow: C22-C37, C31-C43, C36-C80, C84-C88, C122-C184, C196-C204, and C301-C333.

It belongs to the glycosyl hydrolase 19 family. Chitinase class I subfamily.

Its function is as follows. Inactive chitinase-like protein that does not exhibit hydrolytic activity toward chitin. Binds strongly to chitin and possesses antifungal activity toward the fungal pathogen Altenaria alternata in plate assays. Probably involved in defense against fungal pathogens through a mechanism that only involves carbohydrate binding. This is Inactive chitinase-like protein 2 from Hevea brasiliensis (Para rubber tree).